The following is a 334-amino-acid chain: Transaldolase (334 aa).

The residue at position 2 (serine 2) is an N-acetylserine. Residue lysine 143 is the Schiff-base intermediate with substrate of the active site.

It belongs to the transaldolase family. Type 1 subfamily. In terms of assembly, homodimer.

It catalyses the reaction D-sedoheptulose 7-phosphate + D-glyceraldehyde 3-phosphate = D-erythrose 4-phosphate + beta-D-fructose 6-phosphate. Its pathway is carbohydrate degradation; pentose phosphate pathway; D-glyceraldehyde 3-phosphate and beta-D-fructose 6-phosphate from D-ribose 5-phosphate and D-xylulose 5-phosphate (non-oxidative stage): step 2/3. Functionally, transaldolase is important for the balance of metabolites in the pentose-phosphate pathway. This chain is Transaldolase (TAL1), found in Kluyveromyces lactis (strain ATCC 8585 / CBS 2359 / DSM 70799 / NBRC 1267 / NRRL Y-1140 / WM37) (Yeast).